A 224-amino-acid chain; its full sequence is Myogenin (224 aa).

Phosphoserine; by CaMK2G occurs at positions 77 and 79. Residues 81 to 132 form the bHLH domain; sequence DRRRAATLREKRRLKKVNEAFEALKRSTLLNPNQRLPKVEILRSAIQYIERL. A Phosphothreonine; by CaMK2G modification is found at threonine 87.

Homodimer and heterodimer with E12; heterodimerization enhances MYOG DNA-binding and transcriptional activities. Interacts with SMARCA4/BRG1/BAF190A. Interacts (via C-terminal region) with SSRP1 and SUPT16H; the interaction is indicative of an interaction with the FACT complex. nteracts with CSRP3. In terms of processing, phosphorylated by CAMK2G on threonine and serine amino acids in a muscle activity-dependent manner. Phosphorylation of Thr-87 impairs both DNA-binding and trans-activation functions in contracting muscles. In terms of tissue distribution, expressed in myoblast cells. Expressed weakly in myotubes (at protein level). Expressed strongly in denervated muscles and in satellite cells isolated from denervated muscles. Expressed weakly in innervated muscle and in satellite cells isolated from innervated muscles.

It localises to the nucleus. Acts as a transcriptional activator that promotes transcription of muscle-specific target genes and plays a role in muscle differentiation, cell cycle exit and muscle atrophy. Essential for the development of functional embryonic skeletal fiber muscle differentiation. However is dispensable for postnatal skeletal muscle growth; phosphorylation by CAMK2G inhibits its transcriptional activity in respons to muscle activity. Required for the recruitment of the FACT complex to muscle-specific promoter regions, thus promoting gene expression initiation. During terminal myoblast differentiation, plays a role as a strong activator of transcription at loci with an open chromatin structure previously initiated by MYOD1. Together with MYF5 and MYOD1, co-occupies muscle-specific gene promoter core regions during myogenesis. Also cooperates with myocyte-specific enhancer factor MEF2D and BRG1-dependent recruitment of SWI/SNF chromatin-remodeling enzymes to alter chromatin structure at myogenic late gene promoters. Facilitates cell cycle exit during terminal muscle differentiation through the up-regulation of miR-20a expression, which in turn represses genes involved in cell cycle progression. Binds to the E-box containing (E1) promoter region of the miR-20a gene. Also plays a role in preventing reversal of muscle cell differentiation. Contributes to the atrophy-related gene expression in adult denervated muscles. Induces fibroblasts to differentiate into myoblasts. The polypeptide is Myogenin (Myog) (Mus musculus (Mouse)).